Here is a 73-residue protein sequence, read N- to C-terminus: Large ribosomal subunit protein bL31 (73 aa).

It belongs to the bacterial ribosomal protein bL31 family. Type A subfamily. In terms of assembly, part of the 50S ribosomal subunit.

Functionally, binds the 23S rRNA. This is Large ribosomal subunit protein bL31 from Cereibacter sphaeroides (strain ATCC 17025 / ATH 2.4.3) (Rhodobacter sphaeroides).